A 263-amino-acid polypeptide reads, in one-letter code: Mannose-specific lectin 2 (263 aa).

Residues Met1–Ala24 form the signal peptide. 2 consecutive Bulb-type lectin domains span residues Asn26–Arg136 and Arg150–Ser260. Intrachain disulfides connect Cys54-Cys76 and Cys178-Cys203.

Heterotetramer of 2 domain 1 and 2 domain 2 chains arranged as a dimer of domain 1/domain 2 heterodimers.

Its function is as follows. Mannose-specific lectin. Has weak agglutinating activity towards trypsin-treated erythrocytes from rabbit but not from human. The chain is Mannose-specific lectin 2 from Crocus vernus (Dutch crocus).